Consider the following 60-residue polypeptide: MKSDIRVCEAWRSHHDGPVYTLSETCPECGGDAVNSAPAPFDPADPHGKYRRALKERRRL.

The segment at 37–60 is disordered; sequence APAPFDPADPHGKYRRALKERRRL. A compositionally biased stretch (basic residues) spans 49-60; the sequence is KYRRALKERRRL.

This sequence belongs to the NOP10 family.

Functionally, involved in ribosome biogenesis; more specifically in 18S rRNA pseudouridylation and in cleavage of pre-rRNA. In Halobacterium salinarum (strain ATCC 29341 / DSM 671 / R1), this protein is Ribosome biogenesis protein Nop10.